The primary structure comprises 350 residues: L-serine dehydratase (350 aa).

The residue at position 62 (Lys62) is an N6-(pyridoxal phosphate)lysine.

It belongs to the serine/threonine dehydratase family. Pyridoxal 5'-phosphate is required as a cofactor.

The protein resides in the cytoplasm. The catalysed reaction is L-serine = pyruvate + NH4(+). Its pathway is carbohydrate biosynthesis; gluconeogenesis. The polypeptide is L-serine dehydratase (sds) (Dictyostelium discoideum (Social amoeba)).